A 436-amino-acid polypeptide reads, in one-letter code: UPF0597 protein YhaM (436 aa).

This sequence belongs to the UPF0597 family.

Thought to be a D-serine dehydratase, however it does not complement a dsdA (D-serine dehydratase) mutant in strain CFT073, suggesting it may not have that function. The chain is UPF0597 protein YhaM from Escherichia coli O157:H7.